The chain runs to 89 residues: Small ribosomal subunit protein uS14 (89 aa).

Belongs to the universal ribosomal protein uS14 family. In terms of assembly, part of the 30S ribosomal subunit. Contacts proteins S3 and S10.

Binds 16S rRNA, required for the assembly of 30S particles and may also be responsible for determining the conformation of the 16S rRNA at the A site. The chain is Small ribosomal subunit protein uS14 from Chloroherpeton thalassium (strain ATCC 35110 / GB-78).